Consider the following 335-residue polypeptide: Taste receptor type 2 member 119 (335 aa).

Residues 1–7 are Extracellular-facing; that stretch reads MMEGHML. A helical transmembrane segment spans residues 8 to 28; it reads FFLLVVVVQFLTGVLANGLIV. Over 29-43 the chain is Cytoplasmic; it reads VVNAIDLIMWKKMAP. The chain crosses the membrane as a helical span at residues 44–64; it reads LDLLLFCLATSRIILQLCILF. Residues 65–81 lie on the Extracellular side of the membrane; it reads AQLGLSCLVRHTLFADN. A glycan (N-linked (GlcNAc...) asparagine) is linked at Asn-81. Residues 82-102 form a helical membrane-spanning segment; that stretch reads VTFVYIINELSLWFATWLGVF. Over 103-124 the chain is Cytoplasmic; sequence YCAKIATIPHPLFLWLKMRISR. Residues 125-145 form a helical membrane-spanning segment; that stretch reads LVPWLILASVVYVTVTTFIHS. At 146 to 176 the chain is on the extracellular side; that stretch reads RETSELPKQIFISFFSKNTTRVRPAHATLLS. Asn-163 carries an N-linked (GlcNAc...) asparagine glycan. Residues 177–197 traverse the membrane as a helical segment; sequence VFVFGLTLPFLIFTVAVLLLL. The Cytoplasmic segment spans residues 198–224; the sequence is SSLWNHSRQMRTMVGTREPSRHALVSA. A helical membrane pass occupies residues 225–245; that stretch reads MLSILSFLILYLSHDMVAVLI. At 246–256 the chain is on the extracellular side; sequence CTQGLHFGSRT. Residues 257-277 form a helical membrane-spanning segment; sequence FAFCLLVIGMYPSLHSIVLIL. The Cytoplasmic portion of the chain corresponds to 278 to 335; sequence GNPKLKRNAKTFIVHCKCCHCARAWVTSRNPRLSDLPVPATHHSANKTSCSEACIMPS.

It belongs to the G-protein coupled receptor T2R family. In terms of tissue distribution, expressed in subsets of taste receptor cells of the tongue and palate epithelium and exclusively in gustducin-positive cells. Expressed in 15% taste bud cells in circumvallate and foliate papillae but only in 2% in fungiform papillae. Expressed in the gastro and duodenal tissue. Not expressed in colon, liver, heart and kidney.

The protein resides in the membrane. Functionally, gustducin-coupled receptor implicated in the perception of bitter compounds in the oral cavity and the gastrointestinal tract. Signals through PLCB2 and the calcium-regulated cation channel TRPM5. The chain is Taste receptor type 2 member 119 (Tas2r119) from Mus musculus (Mouse).